A 493-amino-acid polypeptide reads, in one-letter code: Ketol-acid reductoisomerase (NADP(+)) (493 aa).

One can recognise a KARI N-terminal Rossmann domain in the interval 15-208 (AQLGKCRFMQ…GGDRAGVLES (194 aa)). NADP(+)-binding positions include 45-48 (CGAQ), Arg-68, Arg-76, Ser-78, and 108-110 (DKQ). His-132 is an active-site residue. Gly-158 is an NADP(+) binding site. KARI C-terminal knotted domains lie at 209–344 (SFVA…NALA) and 345–486 (FAGK…MKDM). Asp-217, Glu-221, Glu-389, and Glu-393 together coordinate Mg(2+). A substrate-binding site is contributed by Ser-414.

Belongs to the ketol-acid reductoisomerase family. Mg(2+) serves as cofactor.

The enzyme catalyses (2R)-2,3-dihydroxy-3-methylbutanoate + NADP(+) = (2S)-2-acetolactate + NADPH + H(+). It carries out the reaction (2R,3R)-2,3-dihydroxy-3-methylpentanoate + NADP(+) = (S)-2-ethyl-2-hydroxy-3-oxobutanoate + NADPH + H(+). It functions in the pathway amino-acid biosynthesis; L-isoleucine biosynthesis; L-isoleucine from 2-oxobutanoate: step 2/4. It participates in amino-acid biosynthesis; L-valine biosynthesis; L-valine from pyruvate: step 2/4. Involved in the biosynthesis of branched-chain amino acids (BCAA). Catalyzes an alkyl-migration followed by a ketol-acid reduction of (S)-2-acetolactate (S2AL) to yield (R)-2,3-dihydroxy-isovalerate. In the isomerase reaction, S2AL is rearranged via a Mg-dependent methyl migration to produce 3-hydroxy-3-methyl-2-ketobutyrate (HMKB). In the reductase reaction, this 2-ketoacid undergoes a metal-dependent reduction by NADPH to yield (R)-2,3-dihydroxy-isovalerate. This chain is Ketol-acid reductoisomerase (NADP(+)), found in Aeromonas salmonicida (strain A449).